A 185-amino-acid polypeptide reads, in one-letter code: N-alpha-acetyltransferase 30 (185 aa).

The 149-residue stretch at isoleucine 31–asparagine 179 folds into the N-acetyltransferase domain.

This sequence belongs to the acetyltransferase family. MAK3 subfamily.

Functionally, probable catalytic component of a complex displaying alpha (N-terminal) acetyltransferase activity. The chain is N-alpha-acetyltransferase 30 from Dictyostelium discoideum (Social amoeba).